The chain runs to 339 residues: Phenylalanine--tRNA ligase alpha subunit (339 aa).

E254 lines the Mg(2+) pocket.

It belongs to the class-II aminoacyl-tRNA synthetase family. Phe-tRNA synthetase alpha subunit type 1 subfamily. Tetramer of two alpha and two beta subunits. It depends on Mg(2+) as a cofactor.

The protein resides in the cytoplasm. It catalyses the reaction tRNA(Phe) + L-phenylalanine + ATP = L-phenylalanyl-tRNA(Phe) + AMP + diphosphate + H(+). This is Phenylalanine--tRNA ligase alpha subunit from Clostridium acetobutylicum (strain ATCC 824 / DSM 792 / JCM 1419 / IAM 19013 / LMG 5710 / NBRC 13948 / NRRL B-527 / VKM B-1787 / 2291 / W).